Reading from the N-terminus, the 481-residue chain is ATP synthase subunit beta, chloroplastic (481 aa).

Position 162–169 (162–169) interacts with ATP; the sequence is GGAGVGKT.

The protein belongs to the ATPase alpha/beta chains family. In terms of assembly, F-type ATPases have 2 components, CF(1) - the catalytic core - and CF(0) - the membrane proton channel. CF(1) has five subunits: alpha(3), beta(3), gamma(1), delta(1), epsilon(1). CF(0) has four main subunits: a(1), b(1), b'(1) and c(9-12).

It is found in the plastid. Its subcellular location is the chloroplast thylakoid membrane. The enzyme catalyses ATP + H2O + 4 H(+)(in) = ADP + phosphate + 5 H(+)(out). In terms of biological role, produces ATP from ADP in the presence of a proton gradient across the membrane. The catalytic sites are hosted primarily by the beta subunits. The polypeptide is ATP synthase subunit beta, chloroplastic (Oltmannsiellopsis viridis (Marine flagellate)).